The chain runs to 241 residues: L-aspartate dehydrogenase (241 aa).

Positions 109 and 164 each coordinate NAD(+). His193 is an active-site residue.

This sequence belongs to the L-aspartate dehydrogenase family.

It catalyses the reaction L-aspartate + NADP(+) + H2O = oxaloacetate + NH4(+) + NADPH + H(+). The enzyme catalyses L-aspartate + NAD(+) + H2O = oxaloacetate + NH4(+) + NADH + H(+). Its pathway is cofactor biosynthesis; NAD(+) biosynthesis; iminoaspartate from L-aspartate (dehydrogenase route): step 1/1. Functionally, specifically catalyzes the NAD or NADP-dependent dehydrogenation of L-aspartate to iminoaspartate. The chain is L-aspartate dehydrogenase from Thermotoga sp. (strain RQ2).